Reading from the N-terminus, the 404-residue chain is DNA gyrase subunit B (404 aa).

The region spanning 321 to 404 (SEIYIVEGDS…VIIMTDADVD (84 aa)) is the Toprim domain. Mg(2+)-binding residues include glutamate 327, aspartate 400, and aspartate 402.

This sequence belongs to the type II topoisomerase GyrB family. As to quaternary structure, heterotetramer, composed of two GyrA and two GyrB chains. In the heterotetramer, GyrA contains the active site tyrosine that forms a transient covalent intermediate with DNA, while GyrB binds cofactors and catalyzes ATP hydrolysis. It depends on Mg(2+) as a cofactor. Mn(2+) serves as cofactor. Ca(2+) is required as a cofactor.

The protein resides in the cytoplasm. It carries out the reaction ATP-dependent breakage, passage and rejoining of double-stranded DNA.. Functionally, a type II topoisomerase that negatively supercoils closed circular double-stranded (ds) DNA in an ATP-dependent manner to modulate DNA topology and maintain chromosomes in an underwound state. Negative supercoiling favors strand separation, and DNA replication, transcription, recombination and repair, all of which involve strand separation. Also able to catalyze the interconversion of other topological isomers of dsDNA rings, including catenanes and knotted rings. Type II topoisomerases break and join 2 DNA strands simultaneously in an ATP-dependent manner. The chain is DNA gyrase subunit B (gyrB) from Bacillus mycoides.